The sequence spans 282 residues: DegV domain-containing protein M6_Spy0690 (282 aa).

Positions 3 to 280 (LAVITDSTAT…EGAIAFGVTP (278 aa)) constitute a DegV domain. Hexadecanoate contacts are provided by Thr-61 and Ser-94.

May bind long-chain fatty acids, such as palmitate, and may play a role in lipid transport or fatty acid metabolism. In Streptococcus pyogenes serotype M6 (strain ATCC BAA-946 / MGAS10394), this protein is DegV domain-containing protein M6_Spy0690.